The sequence spans 615 residues: Medium-chain acyl-CoA ligase ACSF2, mitochondrial (615 aa).

The transit peptide at 1–49 directs the protein to the mitochondrion; sequence MAVYLGMLRLGRLCVASLGARGPRTPLSRPWPNSKLQGVRAFSSGMVDC. An N6-acetyllysine modification is found at Lys-179. Position 182 is an N6-acetyllysine; alternate (Lys-182). The residue at position 182 (Lys-182) is an N6-succinyllysine; alternate. An N6-acetyllysine modification is found at Lys-199. 263-271 is a binding site for ATP; that stretch reads TSGTTGNPK. N6-acetyllysine is present on residues Lys-340 and Lys-398. N6-succinyllysine is present on Lys-478. ATP-binding residues include Asp-493 and Arg-508. Lys-510 carries the post-translational modification N6-acetyllysine. N6-acetyllysine; alternate occurs at positions 544 and 570. N6-succinyllysine; alternate is present on residues Lys-544 and Lys-570. Residue Lys-599 coordinates ATP. Lys-599 carries the post-translational modification N6-succinyllysine.

The protein belongs to the ATP-dependent AMP-binding enzyme family.

The protein resides in the mitochondrion. It carries out the reaction a medium-chain fatty acid + ATP + CoA = a medium-chain fatty acyl-CoA + AMP + diphosphate. The catalysed reaction is octanoate + ATP + CoA = octanoyl-CoA + AMP + diphosphate. In terms of biological role, acyl-CoA synthases catalyze the initial reaction in fatty acid metabolism, by forming a thioester with CoA. Has some preference toward medium-chain substrates. Plays a role in adipocyte differentiation. This Rattus norvegicus (Rat) protein is Medium-chain acyl-CoA ligase ACSF2, mitochondrial.